The sequence spans 976 residues: Ephrin type-A receptor 1 (976 aa).

The signal sequence occupies residues 1–25; the sequence is MERRWPLGLGLVLLLCAPLPPGARA. Topologically, residues 26-547 are extracellular; the sequence is KEVTLMDTSK…PVSRGLTGGE (522 aa). An Eph LBD domain is found at 27–209; it reads EVTLMDTSKA…FYQRCPETLN (183 aa). Fibronectin type-III domains lie at 332 to 445 and 447 to 538; these read PPSA…MGHA and SLSG…TSPP. N-linked (GlcNAc...) asparagine glycosylation occurs at asparagine 414. The helical transmembrane segment at 548-568 threads the bilayer; the sequence is IVAVIFGLLLGAALLLGILVF. The Cytoplasmic portion of the chain corresponds to 569–976; it reads RSRRAQRQRQ…ILCSIQGFKD (408 aa). Phosphotyrosine; by autocatalysis occurs at positions 599 and 605. In terms of domain architecture, Protein kinase spans 624-884; it reads LMVDTVIGEG…KLQAHLEQLL (261 aa). ATP-binding positions include 630-638 and lysine 656; that span reads IGEGEFGEV. The Proton acceptor role is filled by aspartate 749. Position 781 is a phosphotyrosine; by autocatalysis (tyrosine 781). Residues serine 906 and serine 910 each carry the phosphoserine modification. The SAM domain maps to 913 to 976; the sequence is IPYRTVSEWL…ILCSIQGFKD (64 aa). Phosphotyrosine; by autocatalysis is present on tyrosine 930. The PDZ-binding motif lies at 974–976; it reads FKD.

The protein belongs to the protein kinase superfamily. Tyr protein kinase family. Ephrin receptor subfamily. In terms of assembly, homodimer. Forms a signaling complex with LCK; PTK2B/PYK2 and PI3-kinase upon activation by EFNA1; regulates T-lymphocytes migration. Interacts (via SAM domain) with ILK (via ANK repeats); stimulated by EFNA1 but independent of the kinase activity of EPHA1. Interacts (kinase activity-dependent) with PTK2/FAK1. Post-translationally, phosphorylated. Autophosphorylation is stimulated by its ligand EFNA1. In terms of processing, ubiquitinated. Overexpressed in several carcinomas.

It is found in the cell membrane. It catalyses the reaction L-tyrosyl-[protein] + ATP = O-phospho-L-tyrosyl-[protein] + ADP + H(+). Its function is as follows. Receptor tyrosine kinase which binds promiscuously membrane-bound ephrin-A family ligands residing on adjacent cells, leading to contact-dependent bidirectional signaling into neighboring cells. The signaling pathway downstream of the receptor is referred to as forward signaling while the signaling pathway downstream of the ephrin ligand is referred to as reverse signaling. Binds with a low affinity EFNA3 and EFNA4 and with a high affinity to EFNA1 which most probably constitutes its cognate/functional ligand. Upon activation by EFNA1 induces cell attachment to the extracellular matrix inhibiting cell spreading and motility through regulation of ILK and downstream RHOA and RAC. Also plays a role in angiogenesis and regulates cell proliferation. May play a role in apoptosis. In Homo sapiens (Human), this protein is Ephrin type-A receptor 1 (EPHA1).